A 630-amino-acid chain; its full sequence is Plastin-1 (630 aa).

Position 1 is an N-acetylmethionine (M1). EF-hand domains follow at residues 11–46 (EELE…ASLP) and 51–86 (KVRE…LKSK). Ca(2+) contacts are provided by D24, D26, S28, Y30, E35, D64, N66, D68, R70, and E75. 2 actin-binding regions span residues 108-381 (TSSI…GLHK) and 382-626 (PDNN…GKGL). Calponin-homology (CH) domains lie at 122-238 (EEEK…KVGL), 266-377 (LSPE…NTYP), 396-505 (SKEE…RRYT), and 517-626 (KVND…GKGL).

As to quaternary structure, monomer. Post-translationally, phosphorylated.

It localises to the cytoplasm. Its subcellular location is the cell projection. The protein localises to the stereocilium. Actin-bundling protein. In the inner ear, it is required for stereocilia formation. Mediates liquid packing of actin filaments that is necessary for stereocilia to grow to their proper dimensions. This is Plastin-1 (PLS1) from Bos taurus (Bovine).